Consider the following 105-residue polypeptide: Large ribosomal subunit protein uL24 (105 aa).

The protein belongs to the universal ribosomal protein uL24 family. In terms of assembly, part of the 50S ribosomal subunit.

Functionally, one of two assembly initiator proteins, it binds directly to the 5'-end of the 23S rRNA, where it nucleates assembly of the 50S subunit. Its function is as follows. One of the proteins that surrounds the polypeptide exit tunnel on the outside of the subunit. The sequence is that of Large ribosomal subunit protein uL24 from Aeromonas hydrophila subsp. hydrophila (strain ATCC 7966 / DSM 30187 / BCRC 13018 / CCUG 14551 / JCM 1027 / KCTC 2358 / NCIMB 9240 / NCTC 8049).